Here is an 89-residue protein sequence, read N- to C-terminus: Small ribosomal subunit protein uS15 (89 aa).

Belongs to the universal ribosomal protein uS15 family. In terms of assembly, part of the 30S ribosomal subunit. Forms a bridge to the 50S subunit in the 70S ribosome, contacting the 23S rRNA.

In terms of biological role, one of the primary rRNA binding proteins, it binds directly to 16S rRNA where it helps nucleate assembly of the platform of the 30S subunit by binding and bridging several RNA helices of the 16S rRNA. Its function is as follows. Forms an intersubunit bridge (bridge B4) with the 23S rRNA of the 50S subunit in the ribosome. This chain is Small ribosomal subunit protein uS15, found in Chlorobium phaeobacteroides (strain BS1).